The primary structure comprises 562 residues: Protein KASH5 (562 aa).

Over 1 to 521 (MDLPEGPVGG…PQRLRVTRHP (521 aa)) the chain is Cytoplasmic. The tract at residues 125–153 (ALTSRQLPSGCPEAEEPANLESFGGEDPR) is disordered. The stretch at 164 to 349 (SSLEDLELSN…LEEQLSQTYE (186 aa)) forms a coiled coil. Residues 407–481 (ETSEETEFPS…DIPENPPERP (75 aa)) form a disordered region. Basic and acidic residues predominate over residues 431–448 (AHPEEGRKEPSMWLTRRE). Residues 522 to 542 (LIPAPVLGLLLLLLLSVLLLG) traverse the membrane as a helical; Anchor for type IV membrane protein segment. Residues 541 to 562 (LGPSPPPTWPHLQLCYLQPPPV) form an interaction with SUN1 region. Residues 543-562 (PSPPPTWPHLQLCYLQPPPV) lie on the Perinuclear space side of the membrane.

Core component the LINC complex which is composed of inner nuclear membrane SUN domain-containing proteins coupled to outer nuclear membrane KASH domain-containing nesprins. SUN and KASH domain-containing proteins seem to bind each other promiscuously; however, differentially expression of LINC complex constituents is giving rise to specific assemblies. At least SUN1/2-containing core LINC complexes are proposed to be hexameric composed of three protomers of each KASH and SUN domain-containing protein. Interacts with SUN1; this interaction mediates its telomere localization by forming a SUN1:KASH5 LINC complex. Component of a probable SUN2:KASH5 LINC complex. Self-associates. Interacts with DYNC1H1, DCTN1, DYNC1I1/2 and PAFAH1B1; suggesting the association with the dynein-dynactin motor complex. As to expression, expressed in testis (at protein level).

It is found in the nucleus outer membrane. It localises to the nucleus. The protein localises to the chromosome. The protein resides in the telomere. Its subcellular location is the nucleus envelope. Its function is as follows. As a component of the LINC (LInker of Nucleoskeleton and Cytoskeleton) complex, involved in the connection between the nuclear lamina and the cytoskeleton. The nucleocytoplasmic interactions established by the LINC complex play an important role in the transmission of mechanical forces across the nuclear envelope and in nuclear movement and positioning. Required for telomere attachment to nuclear envelope in the prophase of meiosis. Required for rapid telomere prophase movements implicating a SUN1/2:KASH5 LINC complex in which SUN1 and SUN2 seem to act at least partial redundantly. Required for homolog pairing during meiotic prophase in spermatocytes and probably oocytes. Essential for male and female gametogenesis. Recruits cytoplasmic dynein to telomere attachment sites at the nuclear envelope in spermatocytes. In oocytes is involved in meiotic resumption and spindle formation. This chain is Protein KASH5, found in Homo sapiens (Human).